Here is a 674-residue protein sequence, read N- to C-terminus: Alpha-L-arabinofuranosidase 2 (674 aa).

An N-terminal signal peptide occupies residues 1-24 (MDMETSWRFLRSVCLLSFILGSFS). N-linked (GlcNAc...) asparagine glycans are attached at residues N48, N180, N199, N210, N361, N522, and N548.

This sequence belongs to the glycosyl hydrolase 51 family. High expression in flowers, siliques and stems. Observed in the vasculature of older root tissue, at the tip of anthers and in the petal blade of fully developed flowers, in floral abscission zones and in silique replum tissue. Expressed in the cambium and phloem, but not in the xylem or in the vascular system of floral tissues.

The protein localises to the secreted. Its subcellular location is the extracellular space. The protein resides in the extracellular matrix. It catalyses the reaction Hydrolysis of terminal non-reducing alpha-L-arabinofuranoside residues in alpha-L-arabinosides.. In terms of biological role, may be involved in the coordinated dissolution of the cell wall matrix during abscission and in the secondary cell wall formation in xylem vessels. In Arabidopsis thaliana (Mouse-ear cress), this protein is Alpha-L-arabinofuranosidase 2 (ASD2).